Here is a 437-residue protein sequence, read N- to C-terminus: Minor fimbrial subunit HifE (437 aa).

The first 30 residues, 1–30 (MNKKSYINHYLTLFKVTTLLFTLSSNPVWA), serve as a signal peptide directing secretion.

Belongs to the fimbrial protein family.

It localises to the fimbrium. Its function is as follows. May be a minor structural protein required for pilus biogenesis. May be the adhesive component in the pili. This Haemophilus influenzae protein is Minor fimbrial subunit HifE (hifE).